A 338-amino-acid chain; its full sequence is Nicotinate-nucleotide--dimethylbenzimidazole phosphoribosyltransferase (338 aa).

The active-site Proton acceptor is Glu305.

This sequence belongs to the CobT family. As to quaternary structure, homodimer.

The catalysed reaction is 5,6-dimethylbenzimidazole + nicotinate beta-D-ribonucleotide = alpha-ribazole 5'-phosphate + nicotinate + H(+). It functions in the pathway nucleoside biosynthesis; alpha-ribazole biosynthesis; alpha-ribazole from 5,6-dimethylbenzimidazole: step 1/2. Functionally, catalyzes the synthesis of alpha-ribazole-5'-phosphate from nicotinate mononucleotide (NAMN) and 5,6-dimethylbenzimidazole (DMB). In Sinorhizobium sp, this protein is Nicotinate-nucleotide--dimethylbenzimidazole phosphoribosyltransferase (cobU).